Here is a 239-residue protein sequence, read N- to C-terminus: Small ribosomal subunit protein uS3c (239 aa).

The KH type-2 domain maps to 43-139 (IKNYIQKNRK…RFNISIEKVK (97 aa)). The tract at residues 50-74 (NRKKGSNRKIESDSSSEVITHNRKM) is disordered.

This sequence belongs to the universal ribosomal protein uS3 family. In terms of assembly, part of the 30S ribosomal subunit.

The protein localises to the plastid. Its subcellular location is the chloroplast. This chain is Small ribosomal subunit protein uS3c (rps3), found in Hordeum vulgare (Barley).